We begin with the raw amino-acid sequence, 221 residues long: MSSRPGREDVGAAGARRPREPPEQELQRRREQKRRRHDAQQLQQLKHLESFYEKPPPGLIKEDETKPEDCIPDVPGNEHAREFLAHAPTKGLWMPLGKEVKVMQCWRCKRYGHRTGDKECPFFIKGNQKLEQFRVAHEDPMYDIIRDNKRHEKDVRIQQLKQLLEDSTSDEDRSSSSSSEGKEKHKKKKKKEKHKKRKKEKKKKKKRKHKSSKSNEGSDSE.

Basic and acidic residues-rich tracts occupy residues Met1–Val10, Arg17–Arg29, and Ile60–Asp69. The tract at residues Met1 to Gly76 is disordered. A PIM1-binding region spans residues Met1 to Val155. A CCHC-type zinc finger spans residues Gln104–Phe122. A Glycyl lysine isopeptide (Lys-Gly) (interchain with G-Cter in SUMO2) cross-link involves residue Lys129. Residues Asp147–Arg156 are compositionally biased toward basic and acidic residues. The tract at residues Asp147 to Glu221 is disordered. The segment covering Lys184–Ser212 has biased composition (basic residues). Phosphoserine; by PIM1 is present on residues Ser212 and Ser214.

Binds to PIM1. Binds to ZNHIT4. In terms of tissue distribution, appears to be expressed in a wide range of tissues.

The protein localises to the nucleus. Is thought to be a target protein for the PIM1 kinase. May play some roles in B-cell proliferation in association with PIM1. The sequence is that of Retinitis pigmentosa 9 protein (RP9) from Homo sapiens (Human).